Reading from the N-terminus, the 471-residue chain is Glutamate--tRNA ligase (471 aa).

The 'HIGH' region motif lies at Pro9–Gly19. Zn(2+)-binding residues include Cys98, Cys100, Cys125, and His127. A 'KMSKS' region motif is present at residues Lys237–Arg241. An ATP-binding site is contributed by Lys240.

The protein belongs to the class-I aminoacyl-tRNA synthetase family. Glutamate--tRNA ligase type 1 subfamily. In terms of assembly, monomer. The cofactor is Zn(2+).

Its subcellular location is the cytoplasm. It carries out the reaction tRNA(Glu) + L-glutamate + ATP = L-glutamyl-tRNA(Glu) + AMP + diphosphate. In terms of biological role, catalyzes the attachment of glutamate to tRNA(Glu) in a two-step reaction: glutamate is first activated by ATP to form Glu-AMP and then transferred to the acceptor end of tRNA(Glu). This is Glutamate--tRNA ligase from Escherichia coli O157:H7.